The primary structure comprises 291 residues: Bifunctional protein FolD (291 aa).

NADP(+) contacts are provided by residues 167–169 (GRS), Ser-192, and Ile-233.

Belongs to the tetrahydrofolate dehydrogenase/cyclohydrolase family. In terms of assembly, homodimer.

The catalysed reaction is (6R)-5,10-methylene-5,6,7,8-tetrahydrofolate + NADP(+) = (6R)-5,10-methenyltetrahydrofolate + NADPH. It catalyses the reaction (6R)-5,10-methenyltetrahydrofolate + H2O = (6R)-10-formyltetrahydrofolate + H(+). The protein operates within one-carbon metabolism; tetrahydrofolate interconversion. Functionally, catalyzes the oxidation of 5,10-methylenetetrahydrofolate to 5,10-methenyltetrahydrofolate and then the hydrolysis of 5,10-methenyltetrahydrofolate to 10-formyltetrahydrofolate. In Dichelobacter nodosus (strain VCS1703A), this protein is Bifunctional protein FolD.